Consider the following 241-residue polypeptide: MTPPFCWYYPPLQEGILCRRYQRFFAEIELTSGDRVTAHCPNTGPMTGICQVGAPVQVSYHADPKRKLAYTWEMIFVDGTWVGVNTSLPNRVIASALAAGILPELAGYGTQQREVAYGQERSRIDFYLTDHPQEPPAYVEVKNTTWAQGGLALFPDTVTSRGQKHLRELQRLRQTQPETRVCMLYFINRGDCDRFAPGDSADPTYGQLLRAAYNQGVEILPYRFAIEPRGIQFLGTAKLLL.

It belongs to the SfsA family.

The protein is Sugar fermentation stimulation protein homolog of Thermosynechococcus vestitus (strain NIES-2133 / IAM M-273 / BP-1).